Reading from the N-terminus, the 364-residue chain is Chorismate synthase (364 aa).

R47 is an NADP(+) binding site. FMN contacts are provided by residues 125–127, G285, 300–304, and R327; these read RFS and KPTPS.

Belongs to the chorismate synthase family. In terms of assembly, homotetramer. FMNH2 serves as cofactor.

The catalysed reaction is 5-O-(1-carboxyvinyl)-3-phosphoshikimate = chorismate + phosphate. Its pathway is metabolic intermediate biosynthesis; chorismate biosynthesis; chorismate from D-erythrose 4-phosphate and phosphoenolpyruvate: step 7/7. Its function is as follows. Catalyzes the anti-1,4-elimination of the C-3 phosphate and the C-6 proR hydrogen from 5-enolpyruvylshikimate-3-phosphate (EPSP) to yield chorismate, which is the branch point compound that serves as the starting substrate for the three terminal pathways of aromatic amino acid biosynthesis. This reaction introduces a second double bond into the aromatic ring system. In Dehalococcoides mccartyi (strain ATCC BAA-2100 / JCM 16839 / KCTC 5957 / BAV1), this protein is Chorismate synthase.